We begin with the raw amino-acid sequence, 288 residues long: Phosphatidylglycerol--prolipoprotein diacylglyceryl transferase (288 aa).

The next 4 helical transmembrane spans lie at 8 to 28, 49 to 69, 79 to 99, and 109 to 129; these read IGPI…FVGI, AFVA…LFNL, ILAV…GIAG, and INPL…QAIG. Arginine 130 contacts a 1,2-diacyl-sn-glycero-3-phospho-(1'-sn-glycerol). The next 3 membrane-spanning stretches (helical) occupy residues 203–223, 232–252, and 259–279; these read PAML…WFIL, GYMW…VSFF, and FFNF…SIFF.

It belongs to the Lgt family.

Its subcellular location is the cell inner membrane. It carries out the reaction L-cysteinyl-[prolipoprotein] + a 1,2-diacyl-sn-glycero-3-phospho-(1'-sn-glycerol) = an S-1,2-diacyl-sn-glyceryl-L-cysteinyl-[prolipoprotein] + sn-glycerol 1-phosphate + H(+). It functions in the pathway protein modification; lipoprotein biosynthesis (diacylglyceryl transfer). Its function is as follows. Catalyzes the transfer of the diacylglyceryl group from phosphatidylglycerol to the sulfhydryl group of the N-terminal cysteine of a prolipoprotein, the first step in the formation of mature lipoproteins. This chain is Phosphatidylglycerol--prolipoprotein diacylglyceryl transferase, found in Fusobacterium nucleatum subsp. nucleatum (strain ATCC 25586 / DSM 15643 / BCRC 10681 / CIP 101130 / JCM 8532 / KCTC 2640 / LMG 13131 / VPI 4355).